Here is a 376-residue protein sequence, read N- to C-terminus: N-acetyldiaminopimelate deacetylase (376 aa).

Residue Asp-69 is part of the active site. Catalysis depends on Glu-128, which acts as the Proton acceptor.

Belongs to the peptidase M20A family. N-acetyldiaminopimelate deacetylase subfamily.

It catalyses the reaction N-acetyl-(2S,6S)-2,6-diaminopimelate + H2O = (2S,6S)-2,6-diaminopimelate + acetate. It participates in amino-acid biosynthesis; L-lysine biosynthesis via DAP pathway; LL-2,6-diaminopimelate from (S)-tetrahydrodipicolinate (acetylase route): step 3/3. In terms of biological role, catalyzes the conversion of N-acetyl-diaminopimelate to diaminopimelate and acetate. The sequence is that of N-acetyldiaminopimelate deacetylase from Streptococcus uberis (strain ATCC BAA-854 / 0140J).